We begin with the raw amino-acid sequence, 40 residues long: uncharacterized protein (40 aa).

The first 27 residues, 1–27 (MFPADVILQCFGFSVGIALVGYVISLF), serve as a signal peptide directing secretion.

This is an uncharacterized protein from Archaeoglobus fulgidus (strain ATCC 49558 / DSM 4304 / JCM 9628 / NBRC 100126 / VC-16).